Here is a 128-residue protein sequence, read N- to C-terminus: Prokineticin-2 (128 aa).

An N-terminal signal peptide occupies residues 1 to 27 (MRSSRCARLLLLLLLPPLLLTPPAGDA). Cystine bridges form between C34–C46, C40–C58, C45–C106, C68–C114, and C108–C124. Positions 71–95 (MTRKNHFGNGRQERRKRKRRRKKKV) are disordered. The span at 83–95 (ERRKRKRRRKKKV) shows a compositional bias: basic residues.

The protein belongs to the AVIT (prokineticin) family.

It is found in the secreted. In terms of biological role, may function as an output molecule from the suprachiasmatic nucleus (SCN) that transmits behavioral circadian rhythm. May also function locally within the SCN to synchronize output. Potently contracts gastrointestinal (GI) smooth muscle. This is Prokineticin-2 (PROK2) from Bos taurus (Bovine).